The following is a 313-amino-acid chain: Methionyl-tRNA formyltransferase (313 aa).

(6S)-5,6,7,8-tetrahydrofolate is bound at residue Ser-110–Pro-113.

It belongs to the Fmt family.

It catalyses the reaction L-methionyl-tRNA(fMet) + (6R)-10-formyltetrahydrofolate = N-formyl-L-methionyl-tRNA(fMet) + (6S)-5,6,7,8-tetrahydrofolate + H(+). Attaches a formyl group to the free amino group of methionyl-tRNA(fMet). The formyl group appears to play a dual role in the initiator identity of N-formylmethionyl-tRNA by promoting its recognition by IF2 and preventing the misappropriation of this tRNA by the elongation apparatus. The sequence is that of Methionyl-tRNA formyltransferase from Enterococcus faecalis (strain ATCC 700802 / V583).